Here is a 180-residue protein sequence, read N- to C-terminus: Large ribosomal subunit protein uL5 (180 aa).

This sequence belongs to the universal ribosomal protein uL5 family. In terms of assembly, part of the 50S ribosomal subunit; part of the 5S rRNA/L5/L18/L25 subcomplex. Contacts the 5S rRNA and the P site tRNA. Forms a bridge to the 30S subunit in the 70S ribosome.

This is one of the proteins that bind and probably mediate the attachment of the 5S RNA into the large ribosomal subunit, where it forms part of the central protuberance. In the 70S ribosome it contacts protein S13 of the 30S subunit (bridge B1b), connecting the 2 subunits; this bridge is implicated in subunit movement. Contacts the P site tRNA; the 5S rRNA and some of its associated proteins might help stabilize positioning of ribosome-bound tRNAs. This chain is Large ribosomal subunit protein uL5, found in Ligilactobacillus salivarius (strain UCC118) (Lactobacillus salivarius).